A 426-amino-acid polypeptide reads, in one-letter code: Delta-aminolevulinic acid dehydratase, chloroplastic (426 aa).

Residues 1 to 45 (MASTVSFSPANVQMLQGRSCHGHAAFGGCSAVPRTGPRMRSVAVR) constitute a chloroplast transit peptide. Residues 74–107 (GRFPAPPPLVRPKAPEGTPQIRPLDLTKRPRRNR) are disordered. The Schiff-base intermediate with substrate role is filled by Lys-293. 5-aminolevulinate-binding residues include Arg-303 and Lys-315. Glu-331 lines the Mg(2+) pocket. Lys-346 (schiff-base intermediate with substrate) is an active-site residue. 5-aminolevulinate contacts are provided by Ser-372 and Tyr-411.

Belongs to the ALAD family. Homooctamer. Requires Mg(2+) as cofactor.

It is found in the plastid. The protein localises to the chloroplast. The catalysed reaction is 2 5-aminolevulinate = porphobilinogen + 2 H2O + H(+). It functions in the pathway porphyrin-containing compound metabolism; protoporphyrin-IX biosynthesis; coproporphyrinogen-III from 5-aminolevulinate: step 1/4. Its function is as follows. Catalyzes an early step in the biosynthesis of tetrapyrroles. Binds two molecules of 5-aminolevulinate per subunit, each at a distinct site, and catalyzes their condensation to form porphobilinogen. The protein is Delta-aminolevulinic acid dehydratase, chloroplastic (HEMB) of Oryza sativa subsp. japonica (Rice).